We begin with the raw amino-acid sequence, 348 residues long: Rhodopsin (348 aa).

Met-1 bears the N-acetylmethionine mark. Over 1–36 (MNGTEGPNFYVPFSNITGVVRSPFEQPQYYLAEPWQ) the chain is Extracellular. N-linked (GlcNAc...) asparagine glycosylation is found at Asn-2 and Asn-15. The chain crosses the membrane as a helical span at residues 37–61 (FSMLAAYMFLLIVLGFPINFLTLYV). The Cytoplasmic portion of the chain corresponds to 62–73 (TVQHKKLRTPLN). The helical transmembrane segment at 74-96 (YILLNLAVADLFMVFGGFTTTLY) threads the bilayer. The Extracellular portion of the chain corresponds to 97–110 (TSLHGYFVFGPTGC). An intrachain disulfide couples Cys-110 to Cys-187. A helical transmembrane segment spans residues 111–133 (NLEGFFATLGGEIGLWSLVVLAI). Positions 134-136 (ERY) match the 'Ionic lock' involved in activated form stabilization motif. Topologically, residues 134 to 152 (ERYVVVCKPMSNFRFGENH) are cytoplasmic. Residues 153–173 (AIMGVAFTWVMALACAAPPLV) form a helical membrane-spanning segment. Over 174-202 (GWSRYIPEGMQCSCGIDYYTLKPEVNNES) the chain is Extracellular. Glu-201 is a Zn(2+) binding site. The helical transmembrane segment at 203–224 (FVIYMFVVHFTIPMIVIFFCYG) threads the bilayer. The Cytoplasmic portion of the chain corresponds to 225–252 (QLVFTVKEAAAQQQESATTQKAEKEVTR). A helical transmembrane segment spans residues 253–274 (MVIIMVIFFLICWLPYASVAMY). Residues 275-286 (IFTHQGSNFGPI) lie on the Extracellular side of the membrane. Position 279 (Gln-279) interacts with Zn(2+). The helical transmembrane segment at 287–308 (FMTLPAFFAKTASIYNPIIYIM) threads the bilayer. An N6-(retinylidene)lysine modification is found at Lys-296. Residues 309–348 (MNKQFRNCMLTSLCCGKNPLGDDEASATASKTETSQVAPA) lie on the Cytoplasmic side of the membrane. Residues Cys-322 and Cys-323 are each lipidated (S-palmitoyl cysteine). Residues 330-348 (DDEASATASKTETSQVAPA) are interaction with SAG. Ser-334 is modified (phosphoserine). A Phosphothreonine modification is found at Thr-336. Residue Ser-338 is modified to Phosphoserine. 2 positions are modified to phosphothreonine: Thr-340 and Thr-342. Residue Ser-343 is modified to Phosphoserine.

It belongs to the G-protein coupled receptor 1 family. Opsin subfamily. As to quaternary structure, homodimer. May form a complex composed of RHO, GRK1 and RCVRN in a Ca(2+)-dependent manner; RCVRN prevents the interaction between GRK1 and RHO. Interacts with GRK1. Interacts (phosphorylated form) with SAG. Interacts with GNAT1. Interacts with GNAT3. SAG and G-proteins compete for a common binding site. Interacts with PRCD; the interaction promotes PRCD stability. Forms a complex with ASAP1 and ARF4. Forms a complex with ASAP1, RAB11A, Rabin8/RAB3IP, ARF4 and RAB11FIP3; the complex regulates Golgi-to-cilia rhodopsin/RHO transport in photoreceptors. In terms of processing, phosphorylated on some or all of the serine and threonine residues present in the C-terminal region. Contains one covalently linked retinal chromophore. Upon light absorption, the covalently bound 11-cis-retinal is converted to all-trans-retinal. After hydrolysis of the Schiff base and release of the covalently bound all-trans-retinal, active rhodopsin is regenerated by binding of a fresh molecule of 11-cis-retinal.

It localises to the membrane. It is found in the cell projection. Its subcellular location is the cilium. The protein localises to the photoreceptor outer segment. Functionally, photoreceptor required for image-forming vision at low light intensity. Required for photoreceptor cell viability after birth. Light-induced isomerization of 11-cis to all-trans retinal triggers a conformational change that activates signaling via G-proteins. Subsequent receptor phosphorylation mediates displacement of the bound G-protein alpha subunit by the arrestin SAG and terminates signaling. The protein is Rhodopsin (Rho) of Rattus norvegicus (Rat).